Reading from the N-terminus, the 84-residue chain is Esculentin-1Vb (84 aa).

The signal sequence occupies residues 1-22 (MFTLKKPLLLIVLLGIISLSLC). The propeptide occupies 23–36 (EQERNADEDEESET). Cysteine 78 and cysteine 84 are oxidised to a cystine.

Expressed by the skin glands.

The protein resides in the secreted. Functionally, antimicrobial peptide. This is Esculentin-1Vb from Odorrana versabilis (Chinese bamboo leaf odorous frog).